Consider the following 336-residue polypeptide: DNA-directed RNA polymerase subunit alpha (336 aa).

Residues 1 to 233 (MSSNSFLTPR…EQFSFFADLE (233 aa)) are alpha N-terminal domain (alpha-NTD). An alpha C-terminal domain (alpha-CTD) region spans residues 247–336 (IDPILLRPVD…YIKEPGHASS (90 aa)).

This sequence belongs to the RNA polymerase alpha chain family. Homodimer. The RNAP catalytic core consists of 2 alpha, 1 beta, 1 beta' and 1 omega subunit. When a sigma factor is associated with the core the holoenzyme is formed, which can initiate transcription.

It catalyses the reaction RNA(n) + a ribonucleoside 5'-triphosphate = RNA(n+1) + diphosphate. Functionally, DNA-dependent RNA polymerase catalyzes the transcription of DNA into RNA using the four ribonucleoside triphosphates as substrates. This Nitrosomonas europaea (strain ATCC 19718 / CIP 103999 / KCTC 2705 / NBRC 14298) protein is DNA-directed RNA polymerase subunit alpha.